We begin with the raw amino-acid sequence, 85 residues long: Large ribosomal subunit protein bL27 (85 aa).

A compositionally biased stretch (gly residues) spans 1–10 (MAQKKGGGST). The disordered stretch occupies residues 1 to 20 (MAQKKGGGSTRNGRDSKPKM).

Belongs to the bacterial ribosomal protein bL27 family.

The chain is Large ribosomal subunit protein bL27 from Acidovorax ebreus (strain TPSY) (Diaphorobacter sp. (strain TPSY)).